The chain runs to 1029 residues: Beta-galactosidase (1029 aa).

Substrate-binding residues include Asn108 and Asp207. Asp207 is a binding site for Na(+). Residues Glu422, His424, and Glu467 each contribute to the Mg(2+) site. Residues Glu467 and 543-546 (EYAH) each bind substrate. The active-site Proton donor is the Glu467. Catalysis depends on Glu543, which acts as the Nucleophile. Position 603 (Asn603) interacts with Mg(2+). Na(+) contacts are provided by Phe607 and Asn610. Residues Asn610 and Trp1005 each contribute to the substrate site.

It belongs to the glycosyl hydrolase 2 family. Homotetramer. Mg(2+) serves as cofactor. It depends on Na(+) as a cofactor.

The enzyme catalyses Hydrolysis of terminal non-reducing beta-D-galactose residues in beta-D-galactosides.. This Escherichia coli protein is Beta-galactosidase.